We begin with the raw amino-acid sequence, 282 residues long: ATP synthase gamma chain (282 aa).

It belongs to the ATPase gamma chain family. As to quaternary structure, F-type ATPases have 2 components, CF(1) - the catalytic core - and CF(0) - the membrane proton channel. CF(1) has five subunits: alpha(3), beta(3), gamma(1), delta(1), epsilon(1). CF(0) has three main subunits: a, b and c.

Its subcellular location is the cell membrane. Functionally, produces ATP from ADP in the presence of a proton gradient across the membrane. The gamma chain is believed to be important in regulating ATPase activity and the flow of protons through the CF(0) complex. This Clostridium botulinum (strain Langeland / NCTC 10281 / Type F) protein is ATP synthase gamma chain.